A 159-amino-acid polypeptide reads, in one-letter code: MNITVISVGKLKEKYLKQAIDEYSKRLSRYCKLEIIELPDEKTPDNASEKEELQIKEKEGKLILSKIKDNMHVIAMDLKGNEITSEKFSKYIENCGVMGNSNITFVIGGSLGLSQEVIKRADYKLCFSKMTFPHQLFRVMLLEQVYRAFRIMKNEPYHK.

S-adenosyl-L-methionine-binding positions include Gly108 and 127–132; that span reads FSKMTF.

It belongs to the RNA methyltransferase RlmH family. As to quaternary structure, homodimer.

The protein localises to the cytoplasm. The enzyme catalyses pseudouridine(1915) in 23S rRNA + S-adenosyl-L-methionine = N(3)-methylpseudouridine(1915) in 23S rRNA + S-adenosyl-L-homocysteine + H(+). Specifically methylates the pseudouridine at position 1915 (m3Psi1915) in 23S rRNA. In Clostridium perfringens (strain ATCC 13124 / DSM 756 / JCM 1290 / NCIMB 6125 / NCTC 8237 / Type A), this protein is Ribosomal RNA large subunit methyltransferase H.